Reading from the N-terminus, the 479-residue chain is Aspartyl/glutamyl-tRNA(Asn/Gln) amidotransferase subunit B (479 aa).

It belongs to the GatB/GatE family. GatB subfamily. As to quaternary structure, heterotrimer of A, B and C subunits.

The enzyme catalyses L-glutamyl-tRNA(Gln) + L-glutamine + ATP + H2O = L-glutaminyl-tRNA(Gln) + L-glutamate + ADP + phosphate + H(+). It catalyses the reaction L-aspartyl-tRNA(Asn) + L-glutamine + ATP + H2O = L-asparaginyl-tRNA(Asn) + L-glutamate + ADP + phosphate + 2 H(+). Functionally, allows the formation of correctly charged Asn-tRNA(Asn) or Gln-tRNA(Gln) through the transamidation of misacylated Asp-tRNA(Asn) or Glu-tRNA(Gln) in organisms which lack either or both of asparaginyl-tRNA or glutaminyl-tRNA synthetases. The reaction takes place in the presence of glutamine and ATP through an activated phospho-Asp-tRNA(Asn) or phospho-Glu-tRNA(Gln). This chain is Aspartyl/glutamyl-tRNA(Asn/Gln) amidotransferase subunit B, found in Mesoplasma florum (strain ATCC 33453 / NBRC 100688 / NCTC 11704 / L1) (Acholeplasma florum).